The chain runs to 355 residues: Phosphoribosylformylglycinamidine cyclo-ligase (355 aa).

The protein belongs to the AIR synthase family.

The protein localises to the cytoplasm. It catalyses the reaction 2-formamido-N(1)-(5-O-phospho-beta-D-ribosyl)acetamidine + ATP = 5-amino-1-(5-phospho-beta-D-ribosyl)imidazole + ADP + phosphate + H(+). It participates in purine metabolism; IMP biosynthesis via de novo pathway; 5-amino-1-(5-phospho-D-ribosyl)imidazole from N(2)-formyl-N(1)-(5-phospho-D-ribosyl)glycinamide: step 2/2. This Paraburkholderia phymatum (strain DSM 17167 / CIP 108236 / LMG 21445 / STM815) (Burkholderia phymatum) protein is Phosphoribosylformylglycinamidine cyclo-ligase.